Consider the following 276-residue polypeptide: Large ribosomal subunit protein uL2c (276 aa).

The disordered stretch occupies residues 225 to 256; that stretch reads NPVDHPHGGGEGRSPIGRPKPVSPWGKTALGA.

It belongs to the universal ribosomal protein uL2 family. Part of the 50S ribosomal subunit.

The protein resides in the plastid. It localises to the chloroplast. The chain is Large ribosomal subunit protein uL2c (rpl2) from Mesostigma viride (Green alga).